Reading from the N-terminus, the 572-residue chain is ATP-dependent lipid A-core flippase (572 aa).

Transmembrane regions (helical) follow at residues 14-34 (IIPY…VAAL), 55-75 (VFFL…KGVL), 148-168 (IFLL…CFLI), 249-269 (MEII…SEVI), and 272-292 (SATP…YDPV). Positions 22–304 (FIAMFAMIVV…VSQVNSTIQQ (283 aa)) constitute an ABC transmembrane type-1 domain. In terms of domain architecture, ABC transporter spans 338-571 (IEFHDVSFSY…EGEYQLLYNM (234 aa)). Residue 370–377 (GPSGGGKT) participates in ATP binding.

This sequence belongs to the ABC transporter superfamily. Lipid exporter (TC 3.A.1.106) family. As to quaternary structure, homodimer.

Its subcellular location is the cell inner membrane. The catalysed reaction is ATP + H2O + lipid A-core oligosaccharideSide 1 = ADP + phosphate + lipid A-core oligosaccharideSide 2.. Functionally, involved in lipopolysaccharide (LPS) biosynthesis. Translocates lipid A-core from the inner to the outer leaflet of the inner membrane. Transmembrane domains (TMD) form a pore in the inner membrane and the ATP-binding domain (NBD) is responsible for energy generation. The protein is ATP-dependent lipid A-core flippase of Desulfotalea psychrophila (strain LSv54 / DSM 12343).